The sequence spans 169 residues: Ribosome maturation factor RimP (169 aa).

The protein belongs to the RimP family.

The protein resides in the cytoplasm. Required for maturation of 30S ribosomal subunits. In Pseudomonas putida (strain W619), this protein is Ribosome maturation factor RimP.